We begin with the raw amino-acid sequence, 692 residues long: Putative receptor-like protein kinase At1g80870 (692 aa).

A helical transmembrane segment spans residues Leu-20 to Ile-40. The Protein kinase domain maps to Phe-81–Phe-673. ATP-binding positions include Ile-87–Val-95 and Lys-109. Catalysis depends on Asp-206, which acts as the Proton acceptor. 2 disordered regions span residues Glu-427–Met-446 and Arg-511–Met-533. Composition is skewed to basic residues over residues Lys-432–Arg-444 and Arg-511–Asn-524.

Belongs to the protein kinase superfamily. Ser/Thr protein kinase family.

It is found in the cell membrane. It catalyses the reaction L-seryl-[protein] + ATP = O-phospho-L-seryl-[protein] + ADP + H(+). The enzyme catalyses L-threonyl-[protein] + ATP = O-phospho-L-threonyl-[protein] + ADP + H(+). The protein is Putative receptor-like protein kinase At1g80870 of Arabidopsis thaliana (Mouse-ear cress).